The following is a 252-amino-acid chain: Hydroxyacylglutathione hydrolase (252 aa).

Residues His54, His56, Asp58, His59, His111, Asp130, and His170 each contribute to the Zn(2+) site.

It belongs to the metallo-beta-lactamase superfamily. Glyoxalase II family. As to quaternary structure, monomer. The cofactor is Zn(2+).

The catalysed reaction is an S-(2-hydroxyacyl)glutathione + H2O = a 2-hydroxy carboxylate + glutathione + H(+). The protein operates within secondary metabolite metabolism; methylglyoxal degradation; (R)-lactate from methylglyoxal: step 2/2. In terms of biological role, thiolesterase that catalyzes the hydrolysis of S-D-lactoyl-glutathione to form glutathione and D-lactic acid. The chain is Hydroxyacylglutathione hydrolase from Francisella tularensis subsp. holarctica (strain FTNF002-00 / FTA).